The following is a 93-amino-acid chain: Cobalt transport protein CbiN (93 aa).

2 helical membrane-spanning segments follow: residues 5-25 (LILL…NHGG) and 63-83 (LLFT…LGYA).

Belongs to the CbiN family. As to quaternary structure, forms an energy-coupling factor (ECF) transporter complex composed of an ATP-binding protein (A component, CbiO), a transmembrane protein (T component, CbiQ) and 2 possible substrate-capture proteins (S components, CbiM and CbiN) of unknown stoichimetry.

It is found in the cell inner membrane. It functions in the pathway cofactor biosynthesis; adenosylcobalamin biosynthesis. Part of the energy-coupling factor (ECF) transporter complex CbiMNOQ involved in cobalt import. In Klebsiella pneumoniae (strain 342), this protein is Cobalt transport protein CbiN.